The primary structure comprises 557 residues: T-complex protein 1 subunit eta (557 aa).

Ala-2 carries the post-translational modification N-acetylalanine. The tract at residues 529–557 is disordered; the sequence is PKSESAQGDAAGAMGRGRGGGRGRGMRRR. Residues 547-557 show a composition bias toward basic residues; that stretch reads GGGRGRGMRRR.

The protein belongs to the TCP-1 chaperonin family. As to quaternary structure, heterooligomeric complex of about 850 to 900 kDa that forms two stacked rings, 12 to 16 nm in diameter. Interacts with KNAT1.

It is found in the cytoplasm. In terms of biological role, molecular chaperone; assists the folding of proteins upon ATP hydrolysis. Known to play a role, in vitro, in the folding of actin and tubulin. The chain is T-complex protein 1 subunit eta from Arabidopsis thaliana (Mouse-ear cress).